The primary structure comprises 313 residues: Ribosomal RNA small subunit methyltransferase H (313 aa).

S-adenosyl-L-methionine contacts are provided by residues 35–37 (GGH), D55, F80, D102, and Q109.

It belongs to the methyltransferase superfamily. RsmH family.

Its subcellular location is the cytoplasm. It catalyses the reaction cytidine(1402) in 16S rRNA + S-adenosyl-L-methionine = N(4)-methylcytidine(1402) in 16S rRNA + S-adenosyl-L-homocysteine + H(+). Specifically methylates the N4 position of cytidine in position 1402 (C1402) of 16S rRNA. The sequence is that of Ribosomal RNA small subunit methyltransferase H from Shewanella baltica (strain OS223).